The sequence spans 238 residues: Large ribosomal subunit protein uL2 (238 aa).

A disordered region spans residues 198-238 (HPHGGGLHQSVSRPSTVSRNAPPGRKVGHIASRRTGRRGGA). Positions 206-216 (QSVSRPSTVSR) are enriched in polar residues. The segment covering 223–238 (KVGHIASRRTGRRGGA) has biased composition (basic residues).

Belongs to the universal ribosomal protein uL2 family. As to quaternary structure, part of the 50S ribosomal subunit. Forms a bridge to the 30S subunit in the 70S ribosome.

Functionally, one of the primary rRNA binding proteins. Required for association of the 30S and 50S subunits to form the 70S ribosome, for tRNA binding and peptide bond formation. It has been suggested to have peptidyltransferase activity; this is somewhat controversial. Makes several contacts with the 16S rRNA in the 70S ribosome. The protein is Large ribosomal subunit protein uL2 of Sulfolobus acidocaldarius (strain ATCC 33909 / DSM 639 / JCM 8929 / NBRC 15157 / NCIMB 11770).